We begin with the raw amino-acid sequence, 198 residues long: FMN-dependent NADH:quinone oxidoreductase (198 aa).

92–95 (MWNL) is an FMN binding site.

This sequence belongs to the azoreductase type 1 family. In terms of assembly, homodimer. Requires FMN as cofactor.

The catalysed reaction is 2 a quinone + NADH + H(+) = 2 a 1,4-benzosemiquinone + NAD(+). It carries out the reaction N,N-dimethyl-1,4-phenylenediamine + anthranilate + 2 NAD(+) = 2-(4-dimethylaminophenyl)diazenylbenzoate + 2 NADH + 2 H(+). Quinone reductase that provides resistance to thiol-specific stress caused by electrophilic quinones. In terms of biological role, also exhibits azoreductase activity. Catalyzes the reductive cleavage of the azo bond in aromatic azo compounds to the corresponding amines. In Lachnoclostridium phytofermentans (strain ATCC 700394 / DSM 18823 / ISDg) (Clostridium phytofermentans), this protein is FMN-dependent NADH:quinone oxidoreductase.